A 261-amino-acid chain; its full sequence is Phosphatidylglycerol--prolipoprotein diacylglyceryl transferase (261 aa).

4 helical membrane passes run 17 to 37 (FAIH…LLLG), 59 to 79 (LLFA…TLFY), 94 to 114 (IWEG…ALLW), and 121 to 141 (TSFF…LAFG). Residue Arg-142 participates in a 1,2-diacyl-sn-glycero-3-phospho-(1'-sn-glycerol) binding. Transmembrane regions (helical) follow at residues 174-194 (PSQI…LWIY) and 228-248 (FLGL…PMII).

This sequence belongs to the Lgt family.

Its subcellular location is the cell inner membrane. It carries out the reaction L-cysteinyl-[prolipoprotein] + a 1,2-diacyl-sn-glycero-3-phospho-(1'-sn-glycerol) = an S-1,2-diacyl-sn-glyceryl-L-cysteinyl-[prolipoprotein] + sn-glycerol 1-phosphate + H(+). It functions in the pathway protein modification; lipoprotein biosynthesis (diacylglyceryl transfer). Catalyzes the transfer of the diacylglyceryl group from phosphatidylglycerol to the sulfhydryl group of the N-terminal cysteine of a prolipoprotein, the first step in the formation of mature lipoproteins. This Polynucleobacter asymbioticus (strain DSM 18221 / CIP 109841 / QLW-P1DMWA-1) (Polynucleobacter necessarius subsp. asymbioticus) protein is Phosphatidylglycerol--prolipoprotein diacylglyceryl transferase.